Consider the following 512-residue polypeptide: Maturase K (512 aa).

This sequence belongs to the intron maturase 2 family. MatK subfamily.

Its subcellular location is the plastid. The protein localises to the chloroplast. In terms of biological role, usually encoded in the trnK tRNA gene intron. Probably assists in splicing its own and other chloroplast group II introns. The sequence is that of Maturase K from Zantedeschia aethiopica (White calla lily).